A 338-amino-acid polypeptide reads, in one-letter code: Envelope glycoprotein K (338 aa).

The first 30 residues, 1–30, serve as a signal peptide directing secretion; it reads MLAVRSLQHLSTVVLITAYGLVLVWYTVFG. The Extracellular segment spans residues 31–121; sequence ASPLHRCIYA…VNCLETLWYT (91 aa). The involved in fusion stretch occupies residues 31–121; it reads ASPLHRCIYA…VNCLETLWYT (91 aa). 2 N-linked (GlcNAc...) asparagine; by host glycosylation sites follow: N48 and N58. The helical transmembrane segment at 122–140 threads the bilayer; sequence RVRLVVVGWFLYLAFVALH. The Cytoplasmic portion of the chain corresponds to 141-212; the sequence is QRRCMFGVVS…DPVTFLYHRP (72 aa). A helical membrane pass occupies residues 213 to 233; that stretch reads AIGVIVGCELMLRFVAVGLIV. Residues 234–243 are Extracellular-facing; that stretch reads GTAFISRGAC. Residues 244–264 traverse the membrane as a helical segment; it reads AITYPLFLTITTWCFVSTIGL. Residues 265–301 are Cytoplasmic-facing; that stretch reads TELYCILRRGPAPKNADKAAAPGRSKGLSGVCGRCCS. An interaction with UL20 region spans residues 265–301; the sequence is TELYCILRRGPAPKNADKAAAPGRSKGLSGVCGRCCS. The chain crosses the membrane as a helical span at residues 302-322; that stretch reads IILSGIAVRLCYIAVVAGVVL. The Extracellular portion of the chain corresponds to 323-338; the sequence is VALHYEQEIQRRLFDV.

It belongs to the alphaherpesvirinae glycoprotein K family. Interacts (via UL20 interaction region) with protein UL20 (via N-terminus); this interaction probably plays a role in the coordinate transport of protein UL20 and gK to the trans-Golgi network (TGN), and is required for the cell surface expression of gK. In terms of processing, N-glycosylated.

It is found in the host cell membrane. The protein resides in the host endosome membrane. The protein localises to the host Golgi apparatus membrane. In terms of biological role, glycoprotein that probably modulates membrane fusion events during secondary envelopment of cytoplasmic capsids that bud into specific trans-Golgi network (TGN)-derived membranes. Also plays a role, together with gB, in virus-induced cell-to-cell fusion (syncytia formation). Seems to block fusion of virions with infected-cell membranes. The polypeptide is Envelope glycoprotein K (gK) (Homo sapiens (Human)).